The chain runs to 245 residues: tRNA (guanine-N(1)-)-methyltransferase (245 aa).

S-adenosyl-L-methionine contacts are provided by residues Gly-112 and 132 to 137 (IGDFVL).

Belongs to the RNA methyltransferase TrmD family. In terms of assembly, homodimer.

It localises to the cytoplasm. It catalyses the reaction guanosine(37) in tRNA + S-adenosyl-L-methionine = N(1)-methylguanosine(37) in tRNA + S-adenosyl-L-homocysteine + H(+). Its function is as follows. Specifically methylates guanosine-37 in various tRNAs. The sequence is that of tRNA (guanine-N(1)-)-methyltransferase from Geobacter sulfurreducens (strain ATCC 51573 / DSM 12127 / PCA).